The sequence spans 196 residues: Chromophore lyase CpcT/CpeT (196 aa).

It belongs to the CpcT/CpeT biliprotein lyase family.

Functionally, covalently attaches a chromophore to Cys residue(s) of phycobiliproteins. The chain is Chromophore lyase CpcT/CpeT from Synechocystis sp. (strain ATCC 27184 / PCC 6803 / Kazusa).